The following is a 378-amino-acid chain: Polar flagellin B/D (378 aa).

Coiled coils occupy residues 103-128 (SNSK…RIAE) and 311-340 (AFQN…IKDT).

Belongs to the bacterial flagellin family. As to quaternary structure, heteromer of multiple flagellin subunits including FlaA, FlaB/D, FlaC, FlaE and FlaF.

It is found in the secreted. The protein resides in the bacterial flagellum. In terms of biological role, flagellin is the subunit protein which polymerizes to form the filaments of bacterial flagella. FlaB/D is not essential for polar flagellar synthesis and swimming motility. Homomer of FlaB/D is not able to form a functional filament. This is Polar flagellin B/D (flaB) from Vibrio parahaemolyticus serotype O3:K6 (strain RIMD 2210633).